A 172-amino-acid polypeptide reads, in one-letter code: 3-hydroxydecanoyl-[acyl-carrier-protein] dehydratase (172 aa).

His71 is a catalytic residue.

The protein belongs to the thioester dehydratase family. FabA subfamily. Homodimer.

It localises to the cytoplasm. The catalysed reaction is a (3R)-hydroxyacyl-[ACP] = a (2E)-enoyl-[ACP] + H2O. It carries out the reaction (3R)-hydroxydecanoyl-[ACP] = (2E)-decenoyl-[ACP] + H2O. The enzyme catalyses (2E)-decenoyl-[ACP] = (3Z)-decenoyl-[ACP]. It functions in the pathway lipid metabolism; fatty acid biosynthesis. Necessary for the introduction of cis unsaturation into fatty acids. Catalyzes the dehydration of (3R)-3-hydroxydecanoyl-ACP to E-(2)-decenoyl-ACP and then its isomerization to Z-(3)-decenoyl-ACP. Can catalyze the dehydratase reaction for beta-hydroxyacyl-ACPs with saturated chain lengths up to 16:0, being most active on intermediate chain length. The polypeptide is 3-hydroxydecanoyl-[acyl-carrier-protein] dehydratase (Salmonella agona (strain SL483)).